A 752-amino-acid chain; its full sequence is Complement C2 (752 aa).

The N-terminal stretch at 1–20 is a signal peptide; the sequence is MGPLMVLFCLLFLYPGLADS. Sushi domains follow at residues 22–86, 87–146, and 149–206; these read PSCP…VCKP, VRCP…VCDN, and GHCP…ICRQ. Disulfide bonds link Cys-24/Cys-64, Cys-51/Cys-84, Cys-89/Cys-131, Cys-117/Cys-144, Cys-151/Cys-191, and Cys-177/Cys-204. Asn-29 carries N-linked (GlcNAc...) asparagine glycosylation. The N-linked (GlcNAc...) asparagine glycan is linked to Asn-112. The region spanning 254 to 452 is the VWFA domain; it reads NLYLLLDCSQ…KALHQVFEHM (199 aa). The MIDAS-like motif motif lies at 260 to 264; sequence DCSQS. Mg(2+) is bound by residues Ser-262 and Ser-264. Mn(2+) is bound by residues Ser-262 and Ser-264. N-linked (GlcNAc...) asparagine glycosylation is found at Asn-290 and Asn-333. Residue Thr-337 coordinates Mg(2+). Thr-337 lines the Mn(2+) pocket. 3 cysteine pairs are disulfide-bonded: Cys-463–Cys-581, Cys-492–Cys-508, and Cys-584–Cys-600. The 281-residue stretch at 464–744 folds into the Peptidase S1 domain; sequence GVGNMSANAS…MQPWLRQHLG (281 aa). N-linked (GlcNAc...) asparagine glycosylation is found at Asn-467 and Asn-471. Active-site charge relay system residues include His-507 and Asp-561. Asn-621 carries N-linked (GlcNAc...) asparagine glycosylation. Intrachain disulfides connect Cys-638–Cys-665 and Cys-675–Cys-705. Asn-651 carries N-linked (GlcNAc...) (complex) asparagine glycosylation. The active-site Charge relay system is the Ser-679.

It belongs to the peptidase S1 family. Serine protease component of the C3 convertase, also named C4bC2b, composed of the serine protease complement C2b and complement C4b. Serine protease component of the C5 convertase, also named C4bC2bC3b, composed of the serine protease complement C2b, complement C3b, as well as complement C4b. In terms of assembly, (Microbial infection) Interacts with Schistosoma haematobium TOR (via N-terminal extracellular domain). This results in inhibition of the classical and lectin pathway of complement activation, probably due to interference with binding of C2a to C4b such that C3 convertase cannot be formed. This infers resistance to complement-mediated cell lysis, allowing parasite survival and infection. Mg(2+) is required as a cofactor. Requires Mn(2+) as cofactor. In terms of processing, cleaved and activated by different proteases depending on the complement pathway to generate complement C2a and serine protease complement C2b chains. Cleaved and activated by C1S following activation by the classical complement system. Cleaved and activated by MASP2 following activation by the lectin complement system. Cleaved and activated by GZMK following activation by the GZMK complement system.

It is found in the secreted. Its subcellular location is the cell surface. The enzyme catalyses Selective cleavage of Arg-|-Ser bond in complement component C3 alpha-chain to form C3a and C3b, and Arg-|-Xaa bond in complement component C5 alpha-chain to form C5a and C5b.. Its function is as follows. Precursor of the catalytic component of the C3 and C5 convertase complexes, which are part of the complement pathway, a cascade of proteins that leads to phagocytosis and breakdown of pathogens and signaling that strengthens the adaptive immune system. Component C2 is part of the classical, lectin and GZMK complement systems. In terms of biological role, catalytic component of the complement C3 and C5 convertase complexes. Following complement activation, recruited to the surface of pathogens by complement C4b opsonin to form the C3 convertase, or C3b and C4b opsonins to form the C5 convertase. As part of the C3 convertase, cleaves and activate C3 into C3a anaphylatoxin and C3b opsonin, the next components of the complement pathways. As part of the C5 convertase, cleaves and activate C5 into C5a anaphylatoxin and C5b component of the membrane attack complex. This Homo sapiens (Human) protein is Complement C2.